The primary structure comprises 435 residues: MDYNKRSSVSTVPNAAPIRVGFVGLNAAKGWAIKTHYPAILQLSSQFQITALYSPKIETSIATIQRLKLSNATAFPTLESFASSSTIDMIVIAIQVASHYEVVMPLLEFSKNNPNLKYLFVEWALACSLDQAESIYKAAAERGVQTIISLQGRKSPYILRAKELISQGYIGDINSIEIAGNGGWYGYERPVKSPKYIYEIGNGVDLVTTTFGHTIDILQYMTSSYFSRINAMVFNNIPEQELIDERGNRLGQRVPKTVPDHLLFQGTLLNGNVPVSCSFKGGKPTKKFTKNLVIDIHGTKGDLKLEGDAGFAEISNLVLYYSGTRANDFPLANGQQAPLDPGYDAGKEIMEVYHLRNYNAIVGNIHRLYQSISDFHFNTKKIPELPSQFVMQGFDFEGFPTLMDALILHRLIESVYKSNMMGSTLNVSNISHYSL.

An N-acetylmethionine modification is found at Met-1.

To K.lactis GAL80. In terms of assembly, monomer.

Functionally, this protein is a negative regulator for the gene expression of the lactose/galactose metabolic genes. It binds to GAL4 and so blocks transcriptional activation by it, in the absence of an inducing sugar. This is Galactose/lactose metabolism regulatory protein GAL80 (GAL80) from Saccharomyces cerevisiae (strain ATCC 204508 / S288c) (Baker's yeast).